Consider the following 93-residue polypeptide: Small ribosomal subunit protein uS19 (93 aa).

This sequence belongs to the universal ribosomal protein uS19 family.

Functionally, protein S19 forms a complex with S13 that binds strongly to the 16S ribosomal RNA. This chain is Small ribosomal subunit protein uS19, found in Clostridium perfringens (strain ATCC 13124 / DSM 756 / JCM 1290 / NCIMB 6125 / NCTC 8237 / Type A).